The chain runs to 341 residues: Putative methyltransferase YGR283C (341 aa).

This sequence belongs to the class IV-like SAM-binding methyltransferase superfamily.

It is found in the nucleus. It localises to the nucleolus. This Saccharomyces cerevisiae (strain ATCC 204508 / S288c) (Baker's yeast) protein is Putative methyltransferase YGR283C.